Consider the following 457-residue polypeptide: Methanethiol oxidase (457 aa).

It belongs to the selenium-binding protein family.

The protein localises to the nucleus. The protein resides in the cytoplasm. It is found in the cytosol. Its subcellular location is the membrane. It carries out the reaction methanethiol + O2 + H2O = hydrogen sulfide + formaldehyde + H2O2 + H(+). Its pathway is organosulfur degradation. In terms of biological role, catalyzes the oxidation of methanethiol, an organosulfur compound known to be produced in substantial amounts by gut bacteria. Selenium-binding protein which may be involved in the sensing of reactive xenobiotics in the cytoplasm. May be involved in intra-Golgi protein transport. This is Methanethiol oxidase (selenbp1) from Danio rerio (Zebrafish).